Reading from the N-terminus, the 209-residue chain is Ribonuclease HII (209 aa).

Residues 18-209 (GLIAGVDEVG…FKPVKALLEG (192 aa)) enclose the RNase H type-2 domain. Residues Asp24, Glu25, and Asp116 each coordinate a divalent metal cation.

Belongs to the RNase HII family. Requires Mn(2+) as cofactor. Mg(2+) is required as a cofactor.

The protein localises to the cytoplasm. The catalysed reaction is Endonucleolytic cleavage to 5'-phosphomonoester.. In terms of biological role, endonuclease that specifically degrades the RNA of RNA-DNA hybrids. This Shewanella putrefaciens (strain CN-32 / ATCC BAA-453) protein is Ribonuclease HII.